The primary structure comprises 376 residues: Queuine tRNA-ribosyltransferase (376 aa).

Catalysis depends on Asp-89, which acts as the Proton acceptor. Residues 89–93 (DSGGF), Asp-143, Gln-194, and Gly-221 contribute to the substrate site. The segment at 252 to 258 (GVGIPSN) is RNA binding. The Nucleophile role is filled by Asp-271. The tract at residues 276–280 (ARNGR) is RNA binding; important for wobble base 34 recognition. Residues Cys-309, Cys-311, Cys-314, and His-340 each contribute to the Zn(2+) site.

Belongs to the queuine tRNA-ribosyltransferase family. Homodimer. Within each dimer, one monomer is responsible for RNA recognition and catalysis, while the other monomer binds to the replacement base PreQ1. The cofactor is Zn(2+).

The catalysed reaction is 7-aminomethyl-7-carbaguanine + guanosine(34) in tRNA = 7-aminomethyl-7-carbaguanosine(34) in tRNA + guanine. Its pathway is tRNA modification; tRNA-queuosine biosynthesis. In terms of biological role, catalyzes the base-exchange of a guanine (G) residue with the queuine precursor 7-aminomethyl-7-deazaguanine (PreQ1) at position 34 (anticodon wobble position) in tRNAs with GU(N) anticodons (tRNA-Asp, -Asn, -His and -Tyr). Catalysis occurs through a double-displacement mechanism. The nucleophile active site attacks the C1' of nucleotide 34 to detach the guanine base from the RNA, forming a covalent enzyme-RNA intermediate. The proton acceptor active site deprotonates the incoming PreQ1, allowing a nucleophilic attack on the C1' of the ribose to form the product. After dissociation, two additional enzymatic reactions on the tRNA convert PreQ1 to queuine (Q), resulting in the hypermodified nucleoside queuosine (7-(((4,5-cis-dihydroxy-2-cyclopenten-1-yl)amino)methyl)-7-deazaguanosine). The chain is Queuine tRNA-ribosyltransferase from Clostridium botulinum (strain Kyoto / Type A2).